The sequence spans 485 residues: Adenosylhomocysteinase 2 (485 aa).

Residues Thr-64, Asp-139, and Glu-205 each coordinate substrate. Residue 206-208 (TTT) participates in NAD(+) binding. Residues Lys-235 and Asp-239 each contribute to the substrate site. Residues Asn-240, 269–274 (GYGDVG), Glu-292, Asn-327, 348–350 (IGH), and Asn-397 contribute to the NAD(+) site.

It belongs to the adenosylhomocysteinase family. NAD(+) is required as a cofactor.

The enzyme catalyses S-adenosyl-L-homocysteine + H2O = L-homocysteine + adenosine. The protein operates within amino-acid biosynthesis; L-homocysteine biosynthesis; L-homocysteine from S-adenosyl-L-homocysteine: step 1/1. In terms of biological role, adenosylhomocysteine is a competitive inhibitor of S-adenosyl-L-methionine-dependent methyl transferase reactions; therefore adenosylhomocysteinase may play a key role in the control of methylations via regulation of the intracellular concentration of adenosylhomocysteine. The protein is Adenosylhomocysteinase 2 (SAHH2) of Arabidopsis thaliana (Mouse-ear cress).